Consider the following 382-residue polypeptide: Galactokinase (382 aa).

34–37 (EHTD) contacts substrate. Residue 124-130 (GAGLSSS) participates in ATP binding. Residues Ser-130 and Glu-162 each contribute to the Mg(2+) site. The active-site Proton acceptor is the Asp-174. Tyr-223 serves as a coordination point for substrate.

This sequence belongs to the GHMP kinase family. GalK subfamily.

The protein localises to the cytoplasm. The enzyme catalyses alpha-D-galactose + ATP = alpha-D-galactose 1-phosphate + ADP + H(+). It participates in carbohydrate metabolism; galactose metabolism. Its function is as follows. Catalyzes the transfer of the gamma-phosphate of ATP to D-galactose to form alpha-D-galactose-1-phosphate (Gal-1-P). This Escherichia coli O1:K1 / APEC protein is Galactokinase.